Here is a 432-residue protein sequence, read N- to C-terminus: Vacuolar protein sorting-associated protein 38 (432 aa).

Asparagine 20 carries N-linked (GlcNAc...) asparagine glycosylation. A coiled-coil region spans residues 216-287; that stretch reads LDTYQENIKM…KEAIEKLQKK (72 aa). Residues 348-365 traverse the membrane as a helical segment; it reads IINAMLGFYSLFIVIYSY.

The protein belongs to the VPS38 family. Component of the VPS34 PI3-kinase complex II composed of VPS15, VPS30, VPS34 and VPS38.

It is found in the golgi apparatus. The protein resides in the trans-Golgi network membrane. The protein localises to the endosome membrane. Involved in endosome-to-Golgi retrograde transport as part of the VPS34 PI3-kinase complex II. This complex is required for the endosome-to-Golgi retrieval of PEP1 and KEX2, and the recruitment of VPS5 and VPS7, two components of the retromer complex, to endosomal membranes (probably through generating a specific pool of phosphatidylinositol 3-phosphate allowing the recruitment of the retromer complex proteins to the endosome). Mediates the interaction between VPS30 and the VPS34-VPS15 core complex, leading to the recruitment of VPS30 to the membrane. In Candida glabrata (strain ATCC 2001 / BCRC 20586 / JCM 3761 / NBRC 0622 / NRRL Y-65 / CBS 138) (Yeast), this protein is Vacuolar protein sorting-associated protein 38.